Consider the following 300-residue polypeptide: Geranylgeranyl pyrophosphate synthase (300 aa).

The residue at position 1 (M1) is an N-acetylmethionine. Isopentenyl diphosphate is bound by residues K25, R28, and H57. Mg(2+) contacts are provided by D64 and D68. Dimethylallyl diphosphate is bound at residue R73. Residue R74 coordinates isopentenyl diphosphate. 5 residues coordinate dimethylallyl diphosphate: K151, T152, Q185, K202, and K212.

This sequence belongs to the FPP/GGPP synthase family. In terms of assembly, homohexamer; trimer of homodimers. Mg(2+) is required as a cofactor.

It localises to the cytoplasm. The protein localises to the perinuclear region. It is found in the myofibril. The protein resides in the sarcomere. Its subcellular location is the z line. It carries out the reaction isopentenyl diphosphate + dimethylallyl diphosphate = (2E)-geranyl diphosphate + diphosphate. The enzyme catalyses isopentenyl diphosphate + (2E)-geranyl diphosphate = (2E,6E)-farnesyl diphosphate + diphosphate. The catalysed reaction is isopentenyl diphosphate + (2E,6E)-farnesyl diphosphate = (2E,6E,10E)-geranylgeranyl diphosphate + diphosphate. The protein operates within isoprenoid biosynthesis; farnesyl diphosphate biosynthesis; farnesyl diphosphate from geranyl diphosphate and isopentenyl diphosphate: step 1/1. It participates in isoprenoid biosynthesis; geranyl diphosphate biosynthesis; geranyl diphosphate from dimethylallyl diphosphate and isopentenyl diphosphate: step 1/1. Its pathway is isoprenoid biosynthesis; geranylgeranyl diphosphate biosynthesis; geranylgeranyl diphosphate from farnesyl diphosphate and isopentenyl diphosphate: step 1/1. Its function is as follows. Catalyzes the trans-addition of the three molecules of IPP onto DMAPP to form geranylgeranyl pyrophosphate, an important precursor of carotenoids and geranylated proteins. This is Geranylgeranyl pyrophosphate synthase (Ggps1) from Rattus norvegicus (Rat).